We begin with the raw amino-acid sequence, 316 residues long: MST50-interacting protein 11 (316 aa).

7 WD repeats span residues 13 to 53 (GHNG…TSYG), 61 to 100 (GHSH…TTRR), 103 to 142 (GHTN…KYTI), 146 to 187 (GHSE…LQTD), 190 to 229 (GHTG…HLYS), 231 to 269 (NAND…KVDE), and 281 to 316 (SREP…MSRA).

It belongs to the WD repeat G protein beta family. Ribosomal protein RACK1 subfamily. As to quaternary structure, interacts with MST50 and MCK1.

Functionally, involved in regulating the cell wall integrity and MPS1 activation via its interaction with the MAPKKK MCK1. The sequence is that of MST50-interacting protein 11 from Pyricularia oryzae (strain 70-15 / ATCC MYA-4617 / FGSC 8958) (Rice blast fungus).